The chain runs to 463 residues: Glycine--tRNA ligase (463 aa).

Substrate-binding residues include Arg-98 and Glu-170. ATP contacts are provided by residues 202–204 (RNE), 212–217 (FRTREF), 287–288 (EL), and 331–334 (GIER). 217 to 221 (FEQFE) contributes to the substrate binding site. 327-331 (EPSLG) contacts substrate.

This sequence belongs to the class-II aminoacyl-tRNA synthetase family. As to quaternary structure, homodimer.

It localises to the cytoplasm. The catalysed reaction is tRNA(Gly) + glycine + ATP = glycyl-tRNA(Gly) + AMP + diphosphate. Functionally, catalyzes the attachment of glycine to tRNA(Gly). The sequence is that of Glycine--tRNA ligase from Mycoplasmoides gallisepticum (strain R(low / passage 15 / clone 2)) (Mycoplasma gallisepticum).